Consider the following 505-residue polypeptide: Cobyric acid synthase (505 aa).

A GATase cobBQ-type domain is found at 260-453 (RIAVAAIYFP…FHGIIDEPEV (194 aa)). The active-site Nucleophile is the cysteine 341. Histidine 445 is a catalytic residue.

It belongs to the CobB/CobQ family. CobQ subfamily.

It participates in cofactor biosynthesis; adenosylcobalamin biosynthesis. Its function is as follows. Catalyzes amidations at positions B, D, E, and G on adenosylcobyrinic A,C-diamide. NH(2) groups are provided by glutamine, and one molecule of ATP is hydrogenolyzed for each amidation. This chain is Cobyric acid synthase, found in Chlorobium phaeobacteroides (strain DSM 266 / SMG 266 / 2430).